Consider the following 429-residue polypeptide: Enolase (429 aa).

Residue Gln-165 participates in (2R)-2-phosphoglycerate binding. Glu-207 serves as the catalytic Proton donor. Mg(2+) is bound by residues Asp-244, Glu-287, and Asp-314. The (2R)-2-phosphoglycerate site is built by Lys-339, Arg-368, Ser-369, and Lys-390. Lys-339 serves as the catalytic Proton acceptor.

The protein belongs to the enolase family. Requires Mg(2+) as cofactor.

The protein localises to the cytoplasm. Its subcellular location is the secreted. It localises to the cell surface. It catalyses the reaction (2R)-2-phosphoglycerate = phosphoenolpyruvate + H2O. It functions in the pathway carbohydrate degradation; glycolysis; pyruvate from D-glyceraldehyde 3-phosphate: step 4/5. Its function is as follows. Catalyzes the reversible conversion of 2-phosphoglycerate (2-PG) into phosphoenolpyruvate (PEP). It is essential for the degradation of carbohydrates via glycolysis. The chain is Enolase from Roseiflexus sp. (strain RS-1).